A 66-amino-acid polypeptide reads, in one-letter code: uncharacterized protein (66 aa).

This is an uncharacterized protein from Saccharomyces cerevisiae (strain ATCC 204508 / S288c) (Baker's yeast).